A 62-amino-acid chain; its full sequence is Keratin-associated protein 8-1 (62 aa).

Residues 12–53 (GCYWGSYGYPLGYSVGCGYGSTYSPVGYGFGYGYNGSGAFGC) are 12 X 2 AA repeats of G-[YCGS].

The protein belongs to the KRTAP type 8 family. As to quaternary structure, interacts with wool keratins. Wool.

In terms of biological role, in the wool cortex, wool keratin intermediate filaments are embedded in an interfilamentous matrix, consisting of hair keratin-associated proteins (KRTAP), which are essential for the formation of a rigid and resistant wool shaft through their extensive disulfide bond cross-linking with abundant cysteine residues of wool keratins. The matrix proteins include the high-sulfur and high-glycine-tyrosine keratins. This chain is Keratin-associated protein 8-1 (KRTAP8-1), found in Ovis aries (Sheep).